A 352-amino-acid polypeptide reads, in one-letter code: Protein RecA (352 aa).

An ATP-binding site is contributed by 66–73 (GPESSGKT).

The protein belongs to the RecA family.

The protein localises to the cytoplasm. Its function is as follows. Can catalyze the hydrolysis of ATP in the presence of single-stranded DNA, the ATP-dependent uptake of single-stranded DNA by duplex DNA, and the ATP-dependent hybridization of homologous single-stranded DNAs. It interacts with LexA causing its activation and leading to its autocatalytic cleavage. This chain is Protein RecA, found in Psychrobacter arcticus (strain DSM 17307 / VKM B-2377 / 273-4).